A 391-amino-acid chain; its full sequence is G-patch domain-containing protein 1 (391 aa).

The G-patch domain occupies 15-61; sequence KDSAAFKLMKSMGWEEGEGLGKDKQGIKGYVRVTNKQDTSGVGLDKP. Disordered stretches follow at residues 80–132 and 212–307; these read VQAA…EKGK and KASE…PAKR. Composition is skewed to acidic residues over residues 92–102 and 265–295; these read DDSDKEDESED and NSDD…DDDK. Residues 305 to 312 carry the Nuclear localization signal motif; sequence AKRKHDEI.

In terms of tissue distribution, strongly expressed in tissues with high cell proliferation activity that have a high demand for ribosome production such as shoot tips, leaves primordia, root tips and floral buds.

It is found in the nucleus. The protein resides in the nucleolus. Involved in ribosome biogenesis, required for normal progression of rRNA processing. Seems to promote cell proliferation in leaves. This chain is G-patch domain-containing protein 1, found in Arabidopsis thaliana (Mouse-ear cress).